The following is a 1401-amino-acid chain: Alpha-latrotoxin-Lt1a (1401 aa).

A signal peptide spans 1–20; it reads MISVGEIMERANHSLVRMRR. The interval 17-20 is furin-like endopeptidase recognition region; sequence RMRR. Positions 238-257 are helix H8 is the probable transmembrane region of the tetrameric pore inserted in the target cell membrane; it reads VLYALLYGTQTYVSVMFFLL. Cys413 and Cys1066 are disulfide-bonded. ANK repeat units follow at residues 458–489, 490–521, 525–554, 559–589, 593–622, 626–656, 660–690, 695–723, 729–758, 762–791, 795–824, 828–857, 862–891, 895–924, 928–957, 971–1003, 1004–1033, 1035–1064, 1068–1097, 1101–1131, 1137–1166, and 1170–1199; these read LYNAASNPDSAVGFKEFTKLNYDGANIRATFD, HGRTVFHAAAKSGNDKIMFGLTFLAKSTELNQ, KGYTPIHVAADSGNAGIVNLLIQRGVSINS, FLQTPLHLAAQRGFVTTFQRLMESPEININE, DGFTPLHYAIRGGERILEAFLNQISIDVNA, TGLTPFHLAIIKNDWPVASTLLGSKKVDINA, NNITALHYAAILGYLETTKQLINLKEINANV, GLLSALHYAILYKHDDVASFLMRSSNVNV, GGITPLHLAVIQGRKQILSLMFDIGVNIEQ, EKYTPLHLAAMSKYPELIQILLDQGSNFEA, SGATPLHLATFKGKSQAALILLNNEVNWRD, NGQMPIHGAAMTGLLDVAQAIISIDATVVD, NSDTPLNLAAQNSHIDVIKYFIDQGADINT, KGLAPLLAFSKKGNLDMVKYLFDKNANVYI, DGMNFFYYAVQNGHLNIVKYAMSEKDKFEW, EECAISHFAVCDAVQFDRIEIVKYFVGTLGNFA, ICGPLHQAARYGHLDIVKYLVEEEFLSVDG, KTDTPLCYASENGHFTVVQYLVSNGAKVNH, NGMTAIDKAITKNHLQVVQFLAANGVDFRR, RGTTPFLTAVAENALHIAEYLIREKRQDINI, DKDTALHLAVYYKNLQMIKLLIKYGIDVTI, and YDKTALDIAIDAKFSNIVEYLKTKSGKFRR. The segment at 1026–1032 is 4C4.1 epitope; the sequence is EEFLSVD. A furin-like endopeptidase recognition region region spans residues 1196–1199; the sequence is KFRR. A propeptide spanning residues 1200–1401 is cleaved from the precursor; sequence EYKSSYGERS…SDGILTKKLM (202 aa).

It belongs to the cationic peptide 01 (latrotoxin) family. 03 (alpha-latrotoxin) subfamily. In terms of assembly, homotetramer in membranes. Processed by furin-like proteases at both the N- and C-termini. In terms of tissue distribution, expressed in venom gland, cephalothorax, and abdomen tissues from both males and females.

The protein localises to the secreted. It localises to the target cell membrane. Presynaptic neurotoxin that causes massive release of neurotransmitters from vertebrate (but not invertebrate) nerve terminals and endocrine cells via a complex mechanism involving activation of receptor(s) and toxin insertion into the plasma membrane with subsequent pore formation. Binds to neurexin-1-alpha (NRXN1) in a calcium dependent manner, adhesion G protein-coupled receptor L1 (ADGRL1, also termed latrophilin-1 and calcium-independent receptor of latrotoxin (CIRL)), and receptor-type tyrosine-protein phosphatase S (PTPRS), also termed PTP sigma. NRXN1 and PTPRS are suggested to provide a platform for binding and subsequent pore formation events. In contrast, binding to ADGRL1 does not involve oligomerization and channel formation, but direct downstream stimulation of the synaptic fusion machinery. This chain is Alpha-latrotoxin-Lt1a, found in Latrodectus tredecimguttatus (Mediterranean black widow spider).